A 205-amino-acid chain; its full sequence is Transcriptional regulator GfcR (205 aa).

The protein belongs to the purine/pyrimidine phosphoribosyltransferase family. GfcR subfamily.

The protein is Transcriptional regulator GfcR of Methanococcus maripaludis (strain DSM 14266 / JCM 13030 / NBRC 101832 / S2 / LL).